The following is a 170-amino-acid chain: Cyclic dof factor 4 (170 aa).

Positions 25–51 (NEEETHPPEQEATIAVRSSSSSDLTAE) are disordered. Residues 58–112 (IACPRCKSMETKFCYFNNYNVNQPRHFCKGCHRYWTAGGALRNVPVGAGRRKSKP) form a Dof-type zinc finger. Residues Cys-60, Cys-63, Cys-85, and Cys-88 each coordinate Zn(2+).

In terms of tissue distribution, expressed in the vasculature of cotyledons and hypocotyls, leaves and roots.

The protein resides in the nucleus. Functionally, transcription factor that binds specifically to a 5'-AA[AG]G-3' consensus core sequence. Transcriptional repressor of 'CONSTANS' expression. Regulates a photoperiodic flowering response. This chain is Cyclic dof factor 4 (CDF4), found in Arabidopsis thaliana (Mouse-ear cress).